The sequence spans 423 residues: 3-phosphoshikimate 1-carboxyvinyltransferase (423 aa).

Residues K21, S22, and R26 each contribute to the 3-phosphoshikimate site. A phosphoenolpyruvate-binding site is contributed by K21. Residues G92 and R120 each coordinate phosphoenolpyruvate. Residues S166, Q168, S194, D310, and K337 each coordinate 3-phosphoshikimate. Residue Q168 participates in phosphoenolpyruvate binding. D310 (proton acceptor) is an active-site residue. Phosphoenolpyruvate-binding residues include R341, R384, and K409.

This sequence belongs to the EPSP synthase family. Monomer.

The protein localises to the cytoplasm. It catalyses the reaction 3-phosphoshikimate + phosphoenolpyruvate = 5-O-(1-carboxyvinyl)-3-phosphoshikimate + phosphate. Its pathway is metabolic intermediate biosynthesis; chorismate biosynthesis; chorismate from D-erythrose 4-phosphate and phosphoenolpyruvate: step 6/7. Functionally, catalyzes the transfer of the enolpyruvyl moiety of phosphoenolpyruvate (PEP) to the 5-hydroxyl of shikimate-3-phosphate (S3P) to produce enolpyruvyl shikimate-3-phosphate and inorganic phosphate. The chain is 3-phosphoshikimate 1-carboxyvinyltransferase from Syntrophobacter fumaroxidans (strain DSM 10017 / MPOB).